A 105-amino-acid polypeptide reads, in one-letter code: Ig lambda-1 chain C region (105 aa).

The region spanning 6 to 100 (PSVTLFPPSS…EGHTVEKSLS (95 aa)) is the Ig-like domain. Cys27 and Cys86 form a disulfide bridge.

The sequence is that of Ig lambda-1 chain C region from Mus musculus (Mouse).